The following is a 173-amino-acid chain: Large ribosomal subunit protein uL10 (173 aa).

The protein belongs to the universal ribosomal protein uL10 family. In terms of assembly, part of the ribosomal stalk of the 50S ribosomal subunit. The N-terminus interacts with L11 and the large rRNA to form the base of the stalk. The C-terminus forms an elongated spine to which L12 dimers bind in a sequential fashion forming a multimeric L10(L12)X complex.

Forms part of the ribosomal stalk, playing a central role in the interaction of the ribosome with GTP-bound translation factors. In Bifidobacterium adolescentis (strain ATCC 15703 / DSM 20083 / NCTC 11814 / E194a), this protein is Large ribosomal subunit protein uL10.